Here is a 273-residue protein sequence, read N- to C-terminus: 2,3,4,5-tetrahydropyridine-2,6-dicarboxylate N-succinyltransferase (273 aa).

The substrate site is built by Arg104 and Asp141.

It belongs to the transferase hexapeptide repeat family. Homotrimer.

Its subcellular location is the cytoplasm. It carries out the reaction (S)-2,3,4,5-tetrahydrodipicolinate + succinyl-CoA + H2O = (S)-2-succinylamino-6-oxoheptanedioate + CoA. It functions in the pathway amino-acid biosynthesis; L-lysine biosynthesis via DAP pathway; LL-2,6-diaminopimelate from (S)-tetrahydrodipicolinate (succinylase route): step 1/3. The chain is 2,3,4,5-tetrahydropyridine-2,6-dicarboxylate N-succinyltransferase from Laribacter hongkongensis (strain HLHK9).